The chain runs to 573 residues: Urease subunit alpha (573 aa).

The Ni(2+) site is built by H139, H141, and K222. K222 is subject to N6-carboxylysine. Substrate is bound at residue H224. 2 residues coordinate Ni(2+): H251 and H277. The Proton donor role is filled by H325. Residue D365 participates in Ni(2+) binding.

It belongs to the metallo-dependent hydrolases superfamily. Urease alpha subunit family. In terms of assembly, heterotrimer of UreA (gamma), UreB (beta) and UreC (alpha) subunits. Three heterotrimers associate to form the active enzyme. Ni cation is required as a cofactor. Carboxylation allows a single lysine to coordinate two nickel ions.

It is found in the cytoplasm. The enzyme catalyses urea + 2 H2O + H(+) = hydrogencarbonate + 2 NH4(+). It functions in the pathway nitrogen metabolism; urea degradation; CO(2) and NH(3) from urea (urease route): step 1/1. In Flavobacterium johnsoniae (strain ATCC 17061 / DSM 2064 / JCM 8514 / BCRC 14874 / CCUG 350202 / NBRC 14942 / NCIMB 11054 / UW101) (Cytophaga johnsonae), this protein is Urease subunit alpha.